Here is a 492-residue protein sequence, read N- to C-terminus: Catalase (492 aa).

Active-site residues include H65 and N138. Heme is bound at residue Y348.

Belongs to the catalase family. Homotetramer. Requires heme as cofactor.

The protein localises to the cytoplasm. It localises to the cytosol. Its subcellular location is the peroxisome matrix. The catalysed reaction is 2 H2O2 = O2 + 2 H2O. Catalyzes the degradation of hydrogen peroxide (H(2)O(2)) generated by peroxisomal oxidases to water and oxygen, thereby protecting cells from the toxic effects of hydrogen peroxide. The sequence is that of Catalase from Ipomoea batatas (Sweet potato).